The chain runs to 712 residues: Polyribonucleotide nucleotidyltransferase (712 aa).

Mg(2+) is bound by residues D487 and D493. A KH domain is found at 554 to 613 (PKIITMTINPDKIRDVIGPSGKQINKIIEETGVKIDIEQDGTVFISSINQEMNDKAKKII). One can recognise an S1 motif domain in the interval 623-691 (GEIYEGKVKR…KQGRVNLSRK (69 aa)).

This sequence belongs to the polyribonucleotide nucleotidyltransferase family. Mg(2+) is required as a cofactor.

The protein resides in the cytoplasm. It catalyses the reaction RNA(n+1) + phosphate = RNA(n) + a ribonucleoside 5'-diphosphate. Its function is as follows. Involved in mRNA degradation. Catalyzes the phosphorolysis of single-stranded polyribonucleotides processively in the 3'- to 5'-direction. The sequence is that of Polyribonucleotide nucleotidyltransferase from Bacillus cereus (strain 03BB102).